The following is a 421-amino-acid chain: MGSLVLPLSAVFCLVAHSASGSPIMGLEQSPLEEDMPFFDDIFTEQDGIDFNTLLQSMKNEFLKTLNLSDIPVQDTGRVDPPEYMLELYNKFATDRTSMPSANIIRSFKNEDLFSQPVTFNGLRKYPLLFNVSIPHHEEVVMAELRLYTLVQRDRMMYDGVDRKITIFEVLESADGSEEERSMLVLVSTEIYGTNSEWETFDVTDATRRWQKSGPSTHQLEIHIESRQNQAEDTGRGQLEIDMSAQNKHDPLLVVFSDDQSNDKEQKEELNELITHEQDLDLDSDAFFSGPDEEALLQMRSNMIDDSSARIRRNAKGNYCKKTPLYIDFKEIGWDSWIIAPPGYEAYECRGVCNYPLAEHLTPTKHAIIQALVHLKNSQKASKACCVPTKLDPISILYLDKGVVTYKFKYEGMAVSECGCR.

An N-terminal signal peptide occupies residues 1 to 21 (MGSLVLPLSAVFCLVAHSASG). The propeptide occupies 22–313 (SPIMGLEQSP…IDDSSARIRR (292 aa)). N-linked (GlcNAc...) asparagine glycosylation is found at Asn67 and Asn131. Cystine bridges form between Cys320–Cys386, Cys349–Cys418, and Cys353–Cys420.

This sequence belongs to the TGF-beta family. Homodimer; disulfide-linked. Interacts with FBN1 (via N-terminal domain) and FBN2. Interacts with ENG. As to expression, in the embryo, expressed exclusively in the ventricular trabecular myocardium of the developing heart from 9.0 dpc-13.5 dpc. By 16.5 dpc-18.5 dpc, only detectable in atria. Highly expressed in the adult heart where it is found in the right atrium but not in the left atrium. Lower levels in adult liver and lung.

It localises to the secreted. Required for maintaining the proliferative activity of embryonic cardiomyocytes by preventing premature activation of the negative cell cycle regulator CDKN1C/p57KIP and maintaining the required expression levels of cardiogenic factors such as MEF2C and NKX2-5. Acts as a ligand for ACVRL1/ALK1, BMPR1A/ALK3 and BMPR1B/ALK6, leading to activation of SMAD1, SMAD5 and SMAD8 transcription factors. Inhibits endothelial cell migration and growth. May reduce cell migration and cell matrix adhesion in breast cancer cell lines. The sequence is that of Bone morphogenetic protein 10 (Bmp10) from Mus musculus (Mouse).